A 137-amino-acid polypeptide reads, in one-letter code: Small ribosomal subunit protein uS9c (137 aa).

Positions 106–137 (KSEGYLTRDPRVKERKKYGLKKARKAPQFSKR) are disordered. Over residues 118–137 (KERKKYGLKKARKAPQFSKR) the composition is skewed to basic residues.

The protein belongs to the universal ribosomal protein uS9 family.

The protein resides in the plastid. It is found in the chloroplast. This is Small ribosomal subunit protein uS9c (rps9) from Pyropia yezoensis (Susabi-nori).